We begin with the raw amino-acid sequence, 796 residues long: Volume-regulated anion channel subunit LRRC8E (796 aa).

Residues 1-22 are Cytoplasmic-facing; that stretch reads MIPVAEFKQFTEQQPAFKVLKP. The helical transmembrane segment at 23–43 threads the bilayer; that stretch reads WWDVLAEYLTVAMLMIGVFGC. Over 44 to 116 the chain is Extracellular; it reads TLQVTQDKII…YETALHWYAK (73 aa). An intrachain disulfide couples Cys-54 to Cys-301. An N-linked (GlcNAc...) asparagine glycan is attached at Asn-63. A helical membrane pass occupies residues 117–137; it reads YFPYLVVIHTLIFMVCTSFWF. Residues 138–265 are Cytoplasmic-facing; sequence KFPGTSSKIE…IRQTVLKVCK (128 aa). A helical transmembrane segment spans residues 266–286; the sequence is FLAILVYNLVYVEKISFLVAC. Over 287-313 the chain is Extracellular; the sequence is RVETSEVTGYASFCCNHTKAHLFSKLA. Asn-302 is a glycosylation site (N-linked (GlcNAc...) asparagine). The helical transmembrane segment at 314 to 334 threads the bilayer; sequence FCYISFVCIYGLTCIYTLYWL. Residues 335–796 are Cytoplasmic-facing; it reads FHRPLKEYSF…AEVRDKMEEE (462 aa). LRR repeat units lie at residues 508-529, 536-557, 559-579, 583-604, 606-627, 631-652, 654-675, 677-698, 700-721, 723-744, and 746-767; these read GLEELHLEGLFPQELARAATLE, QLKVLSLRSNAGKVPASVTDVA, HLQRLSLHNDGARLVALNSLK, ALRELELVACGLERIPHAVFSL, ALQELDLKDNHLRSIEEILSFQ, KLVTLRLWHNQIAYVPEHVRKL, SLEQLYLSYNKLETLPSQLGLC, GLRLLDVSHNGLHSLPPEVGLL, NLQHLALSYNALEALPEELFFC, KLRTLLLGDNQLSQLSPHVGAL, and ALSRLELKGNRLEALPEELGNC.

It belongs to the LRRC8 family. As to quaternary structure, heterohexamer; oligomerizes with other LRRC8 proteins (LRRC8A, LRRC8C, LRRC8D and/or LRRC8B) to form a heterohexamer. In vivo, the subunit composition may depend primarily on expression levels, and heterooligomeric channels containing various proportions of the different LRRC8 proteins may coexist.

Its subcellular location is the cell membrane. The protein resides in the endoplasmic reticulum membrane. It localises to the lysosome membrane. The enzyme catalyses chloride(in) = chloride(out). It carries out the reaction iodide(out) = iodide(in). It catalyses the reaction taurine(out) = taurine(in). The catalysed reaction is 2',3'-cGAMP(out) = 2',3'-cGAMP(in). In terms of biological role, non-essential component of the volume-regulated anion channel (VRAC, also named VSOAC channel), an anion channel required to maintain a constant cell volume in response to extracellular or intracellular osmotic changes. The VRAC channel conducts iodide better than chloride and can also conduct organic osmolytes like taurine. Mediates efflux of amino acids, such as aspartate, in response to osmotic stress. The VRAC channel also mediates transport of immunoreactive cyclic dinucleotide GMP-AMP (2'-3'-cGAMP), an immune messenger produced in response to DNA virus in the cytosol. Channel activity requires LRRC8A plus at least one other family member (LRRC8B, LRRC8C, LRRC8D or LRRC8E); channel characteristics depend on the precise subunit composition. Also plays a role in lysosome homeostasis by forming functional lysosomal VRAC channels in response to low cytoplasmic ionic strength condition: lysosomal VRAC channels are necessary for the formation of large lysosome-derived vacuoles, which store and then expel excess water to maintain cytosolic water homeostasis. The chain is Volume-regulated anion channel subunit LRRC8E from Homo sapiens (Human).